The primary structure comprises 453 residues: Chromosomal replication initiator protein DnaA (453 aa).

Positions 1–71 (MSEKEIWEKV…QAILFDVVGY (71 aa)) are domain I, interacts with DnaA modulators. Positions 71-114 (YEVKPHFITTEELANYSNNETATPKEATKPSTETTEDNHVLGRE) are domain II. Residues 115 to 331 (QFNAHNTFDT…GALTRLLAYS (217 aa)) are domain III, AAA+ region. Positions 159, 161, 162, and 163 each coordinate ATP. The domain IV, binds dsDNA stretch occupies residues 332–453 (QLLGKPITTE…ENLEKEIRNV (122 aa)).

It belongs to the DnaA family. In terms of assembly, oligomerizes as a right-handed, spiral filament on DNA at oriC.

It is found in the cytoplasm. Functionally, plays an essential role in the initiation and regulation of chromosomal replication. ATP-DnaA binds to the origin of replication (oriC) to initiate formation of the DNA replication initiation complex once per cell cycle. Binds the DnaA box (a 9 base pair repeat at the origin) and separates the double-stranded (ds)DNA. Forms a right-handed helical filament on oriC DNA; dsDNA binds to the exterior of the filament while single-stranded (ss)DNA is stabiized in the filament's interior. The ATP-DnaA-oriC complex binds and stabilizes one strand of the AT-rich DNA unwinding element (DUE), permitting loading of DNA polymerase. After initiation quickly degrades to an ADP-DnaA complex that is not apt for DNA replication. Binds acidic phospholipids. The polypeptide is Chromosomal replication initiator protein DnaA (Staphylococcus aureus (strain MRSA252)).